Here is a 690-residue protein sequence, read N- to C-terminus: Kelch-like protein 8 (690 aa).

Residues 111–178 (CDVELLVAGS…IYTDKIAITM (68 aa)) enclose the BTB domain. The BACK domain occupies 213 to 314 (CMSLYHFSDI…VGWNFLCEAV (102 aa)). Kelch repeat units follow at residues 383–430 (AIFC…SANG), 431–477 (NLYA…SIEN), 478–524 (VIYA…VIGR), 525–571 (YLFA…VLDG), 572–618 (YLYA…ALGG), and 620–665 (VYAI…WANV).

In terms of assembly, component of the BCR(kel-8) E3 ubiquitin ligase complex, at least composed of cul-3, kel-8 and rbx-1. Interacts with rpy-1. As to expression, expressed in neurons.

The protein resides in the synapse. It functions in the pathway protein modification; protein ubiquitination. In terms of biological role, substrate-specific adapter of a BCR (BTB-CUL3-RBX1) E3 ubiquitin ligase complex that regulates degradation of glutamate receptors in neurons. The BCR(kel-8) ubiquitin ligase complex mediates ubiquitination and subsequent degradation of rpy-1. Indirectly regulates the protein turnover of glr-1, possibly via ubiquitination and degradation of rpy-1. The chain is Kelch-like protein 8 (kel-8) from Caenorhabditis elegans.